The sequence spans 360 residues: MSLTRLHIETFRNITSAQLLPGEGINLIYGHNGSGKTSILEAIYFLGMGRSFRSHLSQRVIQHSDDKLTLFANLNVLDKESKIGLRRFRSGETEVKIDGDKVKRLSTLAESLPIQVITPESFALLFEGPKSRRQFIDWGAFHCDKSFHSAWVNVKRILKQRNQLLKNETSYSQIQFWDKELVRYSEVVTDIRTRYVNSLNEQLKGIIGEFLPLVDVKVSFTRGWDSKTDYAQLLEMQYPRDLASGNTGSGPHKADLRLRVGTLPVQDALSRGQLKLLVCALRIAQGKLLKQQIDKNSIYLVDDLPAELDAKHRQLLLQQLIDTGAQVFVTAIEPAAILDSLITPPSKTFHVEHGRVTVIE.

30–37 (GHNGSGKT) is an ATP binding site.

It belongs to the RecF family.

Its subcellular location is the cytoplasm. Its function is as follows. The RecF protein is involved in DNA metabolism; it is required for DNA replication and normal SOS inducibility. RecF binds preferentially to single-stranded, linear DNA. It also seems to bind ATP. In Shewanella sediminis (strain HAW-EB3), this protein is DNA replication and repair protein RecF.